Here is a 364-residue protein sequence, read N- to C-terminus: MLLSLVLHTYSMRYLLPSVVLLGTAPTYVLAWGVWRLLSAFLPARFYQALDDRLYCVYQSMVLFFFENYTGVQILLYGDLPKNKENIIYLANHQSTVDWIVADILAIRQNALGHVRYVLKEGLKWLPLYGCYFAQHGGIYVKRSAKFNEKEMRNKLQSYVDAGTPMYLVIFPEGTRYNPEQTKVLSASQAFAAQRGLAVLKHVLTPRIKATHVAFDCMKNYLDAIYDVTVVYEGKDDGGQRRESPTMTEFLCKECPKIHIHIDRIDKKDVPEEQEHMRRWLHERFEIKDKMLIEFYESPDPERRKRFPGKSVNSKLSIKKTLPSMLILSGLTAGMLMTDAGRKLYVNTWIYGTLLGCLWVTIKA.

2 consecutive transmembrane segments (helical) span residues Leu15–Trp35 and Met61–Pro81. Positions His93–Asp98 match the HXXXXD motif motif. A helical transmembrane segment spans residues Leu344–Ala364.

It belongs to the 1-acyl-sn-glycerol-3-phosphate acyltransferase family. Widely expressed.

The protein localises to the endoplasmic reticulum membrane. The protein resides in the nucleus envelope. It is found in the mitochondrion. It catalyses the reaction a 1-acyl-sn-glycero-3-phosphate + an acyl-CoA = a 1,2-diacyl-sn-glycero-3-phosphate + CoA. The catalysed reaction is 1-(9Z-octadecenoyl)-sn-glycero-3-phosphate + tetradecanoyl-CoA = 1-(9Z)-octadecenoyl-2-tetradecanoyl-sn-glycero-3-phosphate + CoA. It carries out the reaction pentadecanoyl-CoA + 1-(9Z-octadecenoyl)-sn-glycero-3-phosphate = 1-(9Z)-octadecenoyl-2-pentadecanoyl-sn-glycero-3-phosphate + CoA. The enzyme catalyses 1-(9Z-octadecenoyl)-sn-glycero-3-phosphate + octadecanoyl-CoA = 1-(9Z-octadecenoyl)-2-octadecanoyl-sn-glycero-3-phosphate + CoA. It catalyses the reaction nonadecanoyl-CoA + 1-(9Z-octadecenoyl)-sn-glycero-3-phosphate = 1-(9Z)-octadecenoyl-2-nonadecanoyl-sn-glycero-3-phosphate + CoA. The catalysed reaction is 1-(9Z-octadecenoyl)-sn-glycero-3-phosphoethanolamine + (9Z)-octadecenoyl-CoA = 1,2-di-(9Z-octadecenoyl)-sn-glycero-3-phosphoethanolamine + CoA. It carries out the reaction 1-(9Z-octadecenoyl)-sn-glycero-3-phosphocholine + (9Z)-octadecenoyl-CoA = 1,2-di-(9Z-octadecenoyl)-sn-glycero-3-phosphocholine + CoA. The enzyme catalyses 1-(9Z-octadecenoyl)-sn-glycero-3-phospho-(1D-myo-inositol) + (5Z,8Z,11Z,14Z)-eicosatetraenoyl-CoA = 1-(9Z-octadecenoyl)-2-(5Z,8Z,11Z,14Z-eicosatetraenoyl)-sn-glycero-3-phospho-1D-myo-inositol + CoA. It catalyses the reaction 1-(9Z-octadecenoyl)-sn-glycero-3-phospho-L-serine + (9Z)-octadecenoyl-CoA = 1,2-di-(9Z)-octadecenoyl-sn-glycero-3-phospho-L-serine + CoA. The catalysed reaction is 1-(9Z-octadecenoyl)-sn-glycero-3-phospho-L-serine + (5Z,8Z,11Z,14Z)-eicosatetraenoyl-CoA = 1-(9Z-octadecenoyl)-2-(5Z,8Z,11Z,14Z-eicosatetraenoyl)-sn-glycero-3-phospho-L-serine + CoA. It carries out the reaction 1-hexadecanoyl-sn-glycero-3-phosphate + (9Z)-octadecenoyl-CoA = 1-hexadecanoyl-2-(9Z-octadecenoyl)-sn-glycero-3-phosphate + CoA. The enzyme catalyses 1-heptadecanoyl-sn-glycero-3-phosphate + (9Z)-octadecenoyl-CoA = 1-heptadecanoyl-2-(9Z)-octadecenoyl-sn-glycero-3-phosphate + CoA. It catalyses the reaction 1-(5Z,8Z,11Z,14Z-eicosatetraenoyl)-sn-glycero-3-phosphate + (9Z)-octadecenoyl-CoA = 1-(5Z,8Z,11Z,14Z)-eicosatetraenoyl-2-(9Z)-octadecenoyl-sn-glycero-3-phosphate + CoA. The catalysed reaction is 1-octadecanoyl-sn-glycero-3-phosphate + (9Z)-octadecenoyl-CoA = 1-octadecanoyl-2-(9Z-octadecenoyl)-sn-glycero-3-phosphate + CoA. It carries out the reaction 1-(9Z-octadecenoyl)-sn-glycero-3-phosphate + (5Z,8Z,11Z,14Z)-eicosatetraenoyl-CoA = 1-(9Z)-octadecenoyl-2-(5Z,8Z,11Z,14Z)-eicosatetraenoyl-sn-glycero-3-phosphate + CoA. The enzyme catalyses heptadecanoyl-CoA + 1-(9Z-octadecenoyl)-sn-glycero-3-phosphate = 1-(9Z)-octadecenoyl-2-heptadecanoyl-sn-glycero-3-phosphate + CoA. It catalyses the reaction 1-(9Z-octadecenoyl)-sn-glycero-3-phosphocholine + (5Z,8Z,11Z,14Z)-eicosatetraenoyl-CoA = 1-(9Z)-octadecenoyl-2-(5Z,8Z,11Z,14Z)-icosatetraenoyl-sn-glycero-3-phosphocholine + CoA. The catalysed reaction is 1-(9Z-octadecenoyl)-sn-glycero-3-phosphate + (9Z)-octadecenoyl-CoA = 1,2-di-(9Z-octadecenoyl)-sn-glycero-3-phosphate + CoA. It carries out the reaction 1-(9Z-octadecenoyl)-sn-glycero-3-phosphate + hexadecanoyl-CoA = 1-hexadecanoyl-2-(9Z-octadecenoyl)-sn-glycero-3-phosphate + CoA. It functions in the pathway phospholipid metabolism; CDP-diacylglycerol biosynthesis; CDP-diacylglycerol from sn-glycerol 3-phosphate: step 2/3. Functionally, converts 1-acyl-sn-glycerol-3-phosphate (lysophosphatidic acid or LPA) into 1,2-diacyl-sn-glycerol-3-phosphate (phosphatidic acid or PA) by incorporating an acyl moiety at the sn-2 position of the glycerol backbone. Acts on LPA containing saturated or unsaturated fatty acids C15:0-C20:4 at the sn-1 position using C18:1-CoA as the acyl donor. Also acts on lysophosphatidylethanolamine using oleoyl-CoA, but not arachidonoyl-CoA, and lysophosphatidylinositol using arachidonoyl-CoA, but not oleoyl-CoA. Activity toward lysophosphatidylglycerol not detectable. The protein is 1-acyl-sn-glycerol-3-phosphate acyltransferase epsilon (AGPAT5) of Homo sapiens (Human).